A 311-amino-acid chain; its full sequence is tRNA dimethylallyltransferase (311 aa).

19–26 is an ATP binding site; it reads GPSGSGKS. Substrate is bound at residue 21–26; sequence SGSGKS. Residues 44–47 are interaction with substrate tRNA; that stretch reads DSLS.

It belongs to the IPP transferase family. In terms of assembly, monomer. Mg(2+) serves as cofactor.

It catalyses the reaction adenosine(37) in tRNA + dimethylallyl diphosphate = N(6)-dimethylallyladenosine(37) in tRNA + diphosphate. Functionally, catalyzes the transfer of a dimethylallyl group onto the adenine at position 37 in tRNAs that read codons beginning with uridine, leading to the formation of N6-(dimethylallyl)adenosine (i(6)A). The polypeptide is tRNA dimethylallyltransferase (Helicobacter pylori (strain ATCC 700392 / 26695) (Campylobacter pylori)).